A 258-amino-acid chain; its full sequence is Protease HtpX homolog (258 aa).

Helical transmembrane passes span 24 to 44 and 45 to 65; these read VLLFGLIYAILMVVGSILGLG and GPLFYALLGFGVIFLQYLISP. His146 provides a ligand contact to Zn(2+). The active site involves Glu147. His150 lines the Zn(2+) pocket. 2 helical membrane-spanning segments follow: residues 157 to 177 and 186 to 206; these read IVMTLVSAVPLICYYIFWSTV and LVGIAALIAYFIGQLIVLFIS. Glu210 is a binding site for Zn(2+).

Belongs to the peptidase M48B family. Zn(2+) is required as a cofactor.

The protein localises to the cell membrane. In Methanothermobacter thermautotrophicus (strain ATCC 29096 / DSM 1053 / JCM 10044 / NBRC 100330 / Delta H) (Methanobacterium thermoautotrophicum), this protein is Protease HtpX homolog.